The following is a 238-amino-acid chain: MDFVVLWVDGNDPEFIREKNKYTPHNRKIDNDEDNVHRYRDYGTFNYWFRMVERHAPWVNNIYLITNGQRPKWLNVNHPKLKWVRHEEFIPKEYLPIFNASAIEMNIHRIDGLSENFVLFNDDMYLIQDVKYSDFFVNEKPKLLAIYEALVPWSRFSKIYFNDVLVLYRHFPNKKALRQSPFKFFNIKYGQLMLKNRLHNFHGGFTHYRNYRAKIGRHIWFFEGNFLFTSGTKCFQFI.

It belongs to the stealth family.

In Streptococcus thermophilus, this protein is Capsular polysaccharide phosphotransferase eps5J (eps5J).